Here is a 313-residue protein sequence, read N- to C-terminus: tRNA(Ile)-lysidine synthase (313 aa).

37-42 (SGGPDS) is a binding site for ATP.

It belongs to the tRNA(Ile)-lysidine synthase family.

Its subcellular location is the cytoplasm. It carries out the reaction cytidine(34) in tRNA(Ile2) + L-lysine + ATP = lysidine(34) in tRNA(Ile2) + AMP + diphosphate + H(+). Ligates lysine onto the cytidine present at position 34 of the AUA codon-specific tRNA(Ile) that contains the anticodon CAU, in an ATP-dependent manner. Cytidine is converted to lysidine, thus changing the amino acid specificity of the tRNA from methionine to isoleucine. The chain is tRNA(Ile)-lysidine synthase from Corynebacterium efficiens (strain DSM 44549 / YS-314 / AJ 12310 / JCM 11189 / NBRC 100395).